Reading from the N-terminus, the 157-residue chain is Ribosome-binding factor A (157 aa).

The interval 126-157 (RARATAQYAGDADPYKHDDEPSDDFEDDSDEE) is disordered. A compositionally biased stretch (acidic residues) spans 145-157 (EPSDDFEDDSDEE).

It belongs to the RbfA family. Monomer. Binds 30S ribosomal subunits, but not 50S ribosomal subunits or 70S ribosomes.

It is found in the cytoplasm. In terms of biological role, one of several proteins that assist in the late maturation steps of the functional core of the 30S ribosomal subunit. Associates with free 30S ribosomal subunits (but not with 30S subunits that are part of 70S ribosomes or polysomes). Required for efficient processing of 16S rRNA. May interact with the 5'-terminal helix region of 16S rRNA. The protein is Ribosome-binding factor A of Bifidobacterium longum (strain DJO10A).